A 283-amino-acid chain; its full sequence is Elongation factor Ts (283 aa).

Residues 79 to 82 are involved in Mg(2+) ion dislocation from EF-Tu; sequence TDFV.

This sequence belongs to the EF-Ts family.

The protein resides in the cytoplasm. Associates with the EF-Tu.GDP complex and induces the exchange of GDP to GTP. It remains bound to the aminoacyl-tRNA.EF-Tu.GTP complex up to the GTP hydrolysis stage on the ribosome. In Shewanella amazonensis (strain ATCC BAA-1098 / SB2B), this protein is Elongation factor Ts.